Reading from the N-terminus, the 566-residue chain is Membrane protein insertase YidC (566 aa).

A helical transmembrane segment spans residues 6 to 26; the sequence is NLLLLALLFVSFLLYTAWVEE. The tract at residues 30 to 80 is disordered; the sequence is QVAPQVQTEQVDSSVPASVASSANSANLSDGVPNSPQQSSTDATSTELPAS. Residues 31–41 show a composition bias toward polar residues; sequence VAPQVQTEQVD. A compositionally biased stretch (low complexity) spans 42–58; it reads SSVPASVASSANSANLS. Residues 61–80 show a composition bias toward polar residues; the sequence is VPNSPQQSSTDATSTELPAS. 4 helical membrane passes run 356–376, 433–453, 471–491, and 510–530; these read LLLF…LITF, LGGC…YWSL, LSVQ…MFFI, and FMPV…VLYW.

The protein belongs to the OXA1/ALB3/YidC family. Type 1 subfamily. Interacts with the Sec translocase complex via SecD. Specifically interacts with transmembrane segments of nascent integral membrane proteins during membrane integration.

It localises to the cell inner membrane. Functionally, required for the insertion and/or proper folding and/or complex formation of integral membrane proteins into the membrane. Involved in integration of membrane proteins that insert both dependently and independently of the Sec translocase complex, as well as at least some lipoproteins. Aids folding of multispanning membrane proteins. The chain is Membrane protein insertase YidC from Psychromonas ingrahamii (strain DSM 17664 / CCUG 51855 / 37).